The sequence spans 597 residues: Probable E3 ubiquitin-protein ligase ARI1 (597 aa).

Residues Ser119–Gln333 are TRIAD supradomain. Positions 123, 126, 140, 142, 145, 148, 167, 172, 214, 220, 236, 238, 243, 246, 251, 256, 283, and 286 each coordinate Zn(2+). The RING-type 1 zinc-finger motif lies at Cys123 to Cys172. The IBR-type zinc-finger motif lies at Ala194–Cys256. The RING-type 2; atypical zinc-finger motif lies at Cys283–Cys311. Cys296 is an active-site residue. Residues Cys301, Cys303, Cys308, Cys311, His319, and Cys329 each coordinate Zn(2+). The disordered stretch occupies residues Phe536–Gly575. Over residues Asp540 to Gln568 the composition is skewed to polar residues.

This sequence belongs to the RBR family. Ariadne subfamily. Zn(2+) is required as a cofactor. In terms of tissue distribution, ubiquitous.

It catalyses the reaction [E2 ubiquitin-conjugating enzyme]-S-ubiquitinyl-L-cysteine + [acceptor protein]-L-lysine = [E2 ubiquitin-conjugating enzyme]-L-cysteine + [acceptor protein]-N(6)-ubiquitinyl-L-lysine.. It functions in the pathway protein modification; protein ubiquitination. Functionally, might act as an E3 ubiquitin-protein ligase, or as part of E3 complex, which accepts ubiquitin from specific E2 ubiquitin-conjugating enzymes and then transfers it to substrates. This Arabidopsis thaliana (Mouse-ear cress) protein is Probable E3 ubiquitin-protein ligase ARI1 (ARI1).